The following is a 187-amino-acid chain: DNA-directed RNA polymerase subunit Rpo7 (187 aa).

In terms of domain architecture, S1 motif spans 82 to 166; it reads YELIEGEVVD…RGSKIALTMR (85 aa).

Belongs to the eukaryotic RPB7/RPC8 RNA polymerase subunit family. As to quaternary structure, part of the RNA polymerase complex. Forms a stalk with Rpo4 that extends from the main structure.

The protein localises to the cytoplasm. The enzyme catalyses RNA(n) + a ribonucleoside 5'-triphosphate = RNA(n+1) + diphosphate. In terms of biological role, DNA-dependent RNA polymerase (RNAP) catalyzes the transcription of DNA into RNA using the four ribonucleoside triphosphates as substrates. In Methanocaldococcus jannaschii (strain ATCC 43067 / DSM 2661 / JAL-1 / JCM 10045 / NBRC 100440) (Methanococcus jannaschii), this protein is DNA-directed RNA polymerase subunit Rpo7.